The following is a 684-amino-acid chain: Sorbicillinoid biosynthetic cluster transcription factor 2 (684 aa).

The interval 114–151 (ISSAPSLETPPESVAASPPTVDSIPVSHHVNEDPEAEP) is disordered.

Its subcellular location is the nucleus. Transcription factor that acts in concert with sorR1 which is a transcriptional activator of the gene cluster that mediates the biosynthesis of sorbicillinoids, a diverse group of yellow secondary metabolites that restrict growth of competing pathogenic fungi but not of bacteria. The sequence is that of Sorbicillinoid biosynthetic cluster transcription factor 2 from Penicillium rubens (strain ATCC 28089 / DSM 1075 / NRRL 1951 / Wisconsin 54-1255) (Penicillium chrysogenum).